Here is a 224-residue protein sequence, read N- to C-terminus: Transcriptional regulatory protein DltR (224 aa).

The Response regulatory domain occupies 2 to 116 (RLLVVEDEKS…ELLARIRLRT (115 aa)). Asp51 carries the post-translational modification 4-aspartylphosphate. Residues 124-222 (ANQLRLGNIR…TKGFGYSLEE (99 aa)) constitute a DNA-binding region (ompR/PhoB-type).

Phosphorylated by DltS.

The protein resides in the cytoplasm. Its function is as follows. Member of the two-component regulatory system DltS/DltR. Regulates the expression of the dlt operon. In Streptococcus agalactiae serotype III (strain NEM316), this protein is Transcriptional regulatory protein DltR (dltR).